Reading from the N-terminus, the 311-residue chain is uncharacterized protein (311 aa).

This is an uncharacterized protein from Bacillus subtilis (strain 168).